The primary structure comprises 175 residues: Bcl-2-related protein A1 (175 aa).

Positions 77-97 (KEFEDGIINWGRIVTIFAFEG) match the BH1 motif. The short motif at 132-147 (EWIRQNGGWENGFVKK) is the BH2 element.

It belongs to the Bcl-2 family. Interacts directly with BAK1, BID, BMF and BBC3. Interacts directly with BCL2L11/BIM. Interacts with BAX isoform Sigma. Interacts directly with PMAIP1. Interacts with RTL10/BOP. Interacts with ING4. Interacts with UBQLN4. Seems to be restricted to the hematopoietic compartment. Expressed in peripheral blood, spleen, and bone marrow, at moderate levels in lung, small intestine and testis, at a minimal levels in other tissues. Also found in vascular smooth muscle cells and hematopoietic malignancies.

Its subcellular location is the cytoplasm. Retards apoptosis induced by IL-3 deprivation. May function in the response of hemopoietic cells to external signals and in maintaining endothelial survival during infection. Can inhibit apoptosis induced by serum starvation in the mammary epithelial cell line HC11. This chain is Bcl-2-related protein A1 (BCL2A1), found in Homo sapiens (Human).